The following is a 302-amino-acid chain: Succinate--CoA ligase [ADP-forming] subunit alpha (302 aa).

CoA is bound by residues 17 to 20 (TGST), lysine 43, and 96 to 98 (ITE). Residue tyrosine 159 coordinates substrate. The active-site Tele-phosphohistidine intermediate is the histidine 247.

This sequence belongs to the succinate/malate CoA ligase alpha subunit family. As to quaternary structure, heterotetramer of two alpha and two beta subunits.

It carries out the reaction succinate + ATP + CoA = succinyl-CoA + ADP + phosphate. The enzyme catalyses GTP + succinate + CoA = succinyl-CoA + GDP + phosphate. The protein operates within carbohydrate metabolism; tricarboxylic acid cycle; succinate from succinyl-CoA (ligase route): step 1/1. Its function is as follows. Succinyl-CoA synthetase functions in the citric acid cycle (TCA), coupling the hydrolysis of succinyl-CoA to the synthesis of either ATP or GTP and thus represents the only step of substrate-level phosphorylation in the TCA. The alpha subunit of the enzyme binds the substrates coenzyme A and phosphate, while succinate binding and nucleotide specificity is provided by the beta subunit. This Staphylococcus aureus (strain COL) protein is Succinate--CoA ligase [ADP-forming] subunit alpha.